We begin with the raw amino-acid sequence, 253 residues long: Ribonuclease HII (253 aa).

The region spanning 70–253 is the RNase H type-2 domain; sequence NLIAGIDEVG…KSFEPIKSML (184 aa). The a divalent metal cation site is built by D76, E77, and D168.

Belongs to the RNase HII family. It depends on Mn(2+) as a cofactor. Mg(2+) serves as cofactor.

It is found in the cytoplasm. The catalysed reaction is Endonucleolytic cleavage to 5'-phosphomonoester.. Its function is as follows. Endonuclease that specifically degrades the RNA of RNA-DNA hybrids. The protein is Ribonuclease HII of Streptococcus agalactiae serotype III (strain NEM316).